Reading from the N-terminus, the 297-residue chain is Light-independent protochlorophyllide reductase iron-sulfur ATP-binding protein (297 aa).

ATP-binding positions include 41–46 (GIGKST) and K70. S45 is a Mg(2+) binding site. C126 and C160 together coordinate [4Fe-4S] cluster. ATP contacts are provided by residues 211–212 (NR) and 235–237 (PDL).

It belongs to the NifH/BchL/ChlL family. As to quaternary structure, homodimer. Protochlorophyllide reductase is composed of three subunits; BchL, BchN and BchB. [4Fe-4S] cluster is required as a cofactor.

The catalysed reaction is chlorophyllide a + oxidized 2[4Fe-4S]-[ferredoxin] + 2 ADP + 2 phosphate = protochlorophyllide a + reduced 2[4Fe-4S]-[ferredoxin] + 2 ATP + 2 H2O. Its pathway is porphyrin-containing compound metabolism; bacteriochlorophyll biosynthesis (light-independent). Functionally, component of the dark-operative protochlorophyllide reductase (DPOR) that uses Mg-ATP and reduced ferredoxin to reduce ring D of protochlorophyllide (Pchlide) to form chlorophyllide a (Chlide). This reaction is light-independent. The L component serves as a unique electron donor to the NB-component of the complex, and binds Mg-ATP. In Cereibacter sphaeroides (strain ATCC 17025 / ATH 2.4.3) (Rhodobacter sphaeroides), this protein is Light-independent protochlorophyllide reductase iron-sulfur ATP-binding protein.